A 293-amino-acid polypeptide reads, in one-letter code: Ribosomal protein L11 methyltransferase (293 aa).

The S-adenosyl-L-methionine site is built by T146, G167, D189, and N230.

It belongs to the methyltransferase superfamily. PrmA family.

The protein localises to the cytoplasm. The enzyme catalyses L-lysyl-[protein] + 3 S-adenosyl-L-methionine = N(6),N(6),N(6)-trimethyl-L-lysyl-[protein] + 3 S-adenosyl-L-homocysteine + 3 H(+). Methylates ribosomal protein L11. The chain is Ribosomal protein L11 methyltransferase from Colwellia psychrerythraea (strain 34H / ATCC BAA-681) (Vibrio psychroerythus).